We begin with the raw amino-acid sequence, 509 residues long: ATP synthase subunit alpha (509 aa).

Gly-171–Thr-178 contributes to the ATP binding site.

This sequence belongs to the ATPase alpha/beta chains family. F-type ATPases have 2 components, CF(1) - the catalytic core - and CF(0) - the membrane proton channel. CF(1) has five subunits: alpha(3), beta(3), gamma(1), delta(1), epsilon(1). CF(0) has three main subunits: a(1), b(2) and c(9-12). The alpha and beta chains form an alternating ring which encloses part of the gamma chain. CF(1) is attached to CF(0) by a central stalk formed by the gamma and epsilon chains, while a peripheral stalk is formed by the delta and b chains.

It localises to the cell inner membrane. It catalyses the reaction ATP + H2O + 4 H(+)(in) = ADP + phosphate + 5 H(+)(out). Functionally, produces ATP from ADP in the presence of a proton gradient across the membrane. The alpha chain is a regulatory subunit. The polypeptide is ATP synthase subunit alpha (Neorickettsia sennetsu (strain ATCC VR-367 / Miyayama) (Ehrlichia sennetsu)).